Reading from the N-terminus, the 192-residue chain is Protein hunchback (192 aa).

2 disordered regions span residues 16-54 (SHHH…SNTN) and 152-192 (LTPP…KYMA). The segment covering 17-28 (HHHHHHHAHHSH) has biased composition (basic residues). Residues 32-41 (SNSNASSPHQ) show a composition bias toward low complexity. Positions 173–192 (EPEKEHDLMSNSSEDMKYMA) are enriched in basic and acidic residues.

The protein belongs to the hunchback C2H2-type zinc-finger protein family.

The protein localises to the nucleus. Functionally, gap class segmentation protein that controls development of head structures. The chain is Protein hunchback (hb) from Drosophila tanythrix (Fruit fly).